Consider the following 310-residue polypeptide: Glycerol-3-phosphate dehydrogenase [NAD(P)+] (310 aa).

Positions 14, 34, 35, and 82 each coordinate NADPH. Residues Lys82 and Gly110 each contribute to the sn-glycerol 3-phosphate site. Ser114 is an NADPH binding site. Residues Lys165, Asp218, Ser228, Arg229, and Asn230 each contribute to the sn-glycerol 3-phosphate site. Lys165 serves as the catalytic Proton acceptor. An NADPH-binding site is contributed by Arg229. Position 255 (Glu255) interacts with NADPH.

The protein belongs to the NAD-dependent glycerol-3-phosphate dehydrogenase family.

The protein localises to the cytoplasm. The enzyme catalyses sn-glycerol 3-phosphate + NAD(+) = dihydroxyacetone phosphate + NADH + H(+). It catalyses the reaction sn-glycerol 3-phosphate + NADP(+) = dihydroxyacetone phosphate + NADPH + H(+). It participates in membrane lipid metabolism; glycerophospholipid metabolism. Its function is as follows. Catalyzes the reduction of the glycolytic intermediate dihydroxyacetone phosphate (DHAP) to sn-glycerol 3-phosphate (G3P), the key precursor for phospholipid synthesis. The protein is Glycerol-3-phosphate dehydrogenase [NAD(P)+] of Acaryochloris marina (strain MBIC 11017).